The chain runs to 709 residues: ATP-dependent zinc metalloprotease YME1 homolog (709 aa).

Positions 152–182 are disordered; the sequence is FTSDTSSTVSSTPSLNHSLQNSMPPSTPTPP. Positions 153–165 are enriched in low complexity; sequence TSDTSSTVSSTPS. A helical membrane pass occupies residues 217–239; the sequence is IFKFIAGLSVASYFVLLGMSIFA. Residue 307-314 coordinates ATP; it reads GPPGTGKT. Histidine 530 contacts Zn(2+). Glutamate 531 is an active-site residue. Zn(2+)-binding residues include histidine 534 and aspartate 608.

This sequence in the N-terminal section; belongs to the AAA ATPase family. In the C-terminal section; belongs to the peptidase M41 family. Zn(2+) serves as cofactor.

The protein resides in the mitochondrion membrane. In terms of biological role, putative ATP-dependent protease. This chain is ATP-dependent zinc metalloprotease YME1 homolog, found in Schizosaccharomyces pombe (strain 972 / ATCC 24843) (Fission yeast).